The following is a 297-amino-acid chain: Ribosomal RNA small subunit methyltransferase H (297 aa).

Residues 34–36 (GGH), Asp-54, Phe-81, Asp-99, and Gln-106 contribute to the S-adenosyl-L-methionine site.

This sequence belongs to the methyltransferase superfamily. RsmH family.

It is found in the cytoplasm. It catalyses the reaction cytidine(1402) in 16S rRNA + S-adenosyl-L-methionine = N(4)-methylcytidine(1402) in 16S rRNA + S-adenosyl-L-homocysteine + H(+). Functionally, specifically methylates the N4 position of cytidine in position 1402 (C1402) of 16S rRNA. This is Ribosomal RNA small subunit methyltransferase H from Chlamydia pneumoniae (Chlamydophila pneumoniae).